The primary structure comprises 227 residues: UPF0758 protein lpp2553 (227 aa).

In terms of domain architecture, MPN spans 102-225 (RLSNTQQTYA…YSIFAENKWV (124 aa)). Zn(2+) is bound by residues His173, His175, and Asp186. A JAMM motif motif is present at residues 173–186 (HNHPSGLSDASQQD).

It belongs to the UPF0758 family.

The protein is UPF0758 protein lpp2553 of Legionella pneumophila (strain Paris).